Consider the following 337-residue polypeptide: Eukaryotic translation initiation factor 3 subunit H (337 aa).

The 133-residue stretch at 21-153 (VQCDGLAVMK…LKAYRLTPQA (133 aa)) folds into the MPN domain.

The protein belongs to the eIF-3 subunit H family. Component of the eukaryotic translation initiation factor 3 (eIF-3) complex. The eIF-3 complex interacts with pix. Interacts with mxt.

The protein localises to the cytoplasm. Its function is as follows. Component of the eukaryotic translation initiation factor 3 (eIF-3) complex, which is involved in protein synthesis of a specialized repertoire of mRNAs and, together with other initiation factors, stimulates binding of mRNA and methionyl-tRNAi to the 40S ribosome. The eIF-3 complex specifically targets and initiates translation of a subset of mRNAs involved in cell proliferation. This Drosophila virilis (Fruit fly) protein is Eukaryotic translation initiation factor 3 subunit H.